The sequence spans 363 residues: Protein RecA (363 aa).

79-86 (GPESSGKT) lines the ATP pocket.

It belongs to the RecA family.

It is found in the cytoplasm. Its function is as follows. Can catalyze the hydrolysis of ATP in the presence of single-stranded DNA, the ATP-dependent uptake of single-stranded DNA by duplex DNA, and the ATP-dependent hybridization of homologous single-stranded DNAs. It interacts with LexA causing its activation and leading to its autocatalytic cleavage. This chain is Protein RecA, found in Methylobacterium radiotolerans (strain ATCC 27329 / DSM 1819 / JCM 2831 / NBRC 15690 / NCIMB 10815 / 0-1).